The following is a 473-amino-acid chain: Photosystem II CP43 reaction center protein (473 aa).

Positions 1-14 are excised as a propeptide; sequence MKILYSQRRFYHVE. 5 consecutive transmembrane segments (helical) span residues 69–93, 134–155, 178–200, 255–275, and 291–312; these read LFEV…PHLA, LIGP…RDKN, KAMF…RYIN, KPFG…LSYS, and WYNN…ASQA. Glu367 provides a ligand contact to [CaMn4O5] cluster. Residues 447–471 form a helical membrane-spanning segment; that stretch reads RARAAAAGFEKGINRENEPVLSMKL.

The protein belongs to the PsbB/PsbC family. PsbC subfamily. In terms of assembly, PSII is composed of 1 copy each of membrane proteins PsbA, PsbB, PsbC, PsbD, PsbE, PsbF, PsbH, PsbI, PsbJ, PsbK, PsbL, PsbM, PsbT, PsbY, PsbZ, Psb30/Ycf12, at least 3 peripheral proteins of the oxygen-evolving complex and a large number of cofactors. It forms dimeric complexes. Binds multiple chlorophylls and provides some of the ligands for the Ca-4Mn-5O cluster of the oxygen-evolving complex. It may also provide a ligand for a Cl- that is required for oxygen evolution. PSII binds additional chlorophylls, carotenoids and specific lipids. is required as a cofactor.

The protein resides in the plastid. It localises to the chloroplast thylakoid membrane. In terms of biological role, one of the components of the core complex of photosystem II (PSII). It binds chlorophyll and helps catalyze the primary light-induced photochemical processes of PSII. PSII is a light-driven water:plastoquinone oxidoreductase, using light energy to abstract electrons from H(2)O, generating O(2) and a proton gradient subsequently used for ATP formation. The chain is Photosystem II CP43 reaction center protein from Galdieria sulphuraria (Red alga).